The primary structure comprises 354 residues: Tryptophan--tRNA ligase (354 aa).

ATP is bound by residues 13–15 (QPT) and 21–22 (GN). A 'HIGH' region motif is present at residues 14–22 (PTGNLHLGN). Aspartate 137 contributes to the L-tryptophan binding site. ATP contacts are provided by residues 149–151 (GDD), valine 208, and 217–221 (KMSKS). Residues 217–221 (KMSKS) carry the 'KMSKS' region motif.

Belongs to the class-I aminoacyl-tRNA synthetase family. Homodimer.

It localises to the cytoplasm. It carries out the reaction tRNA(Trp) + L-tryptophan + ATP = L-tryptophyl-tRNA(Trp) + AMP + diphosphate + H(+). Its function is as follows. Catalyzes the attachment of tryptophan to tRNA(Trp). The sequence is that of Tryptophan--tRNA ligase from Rhizobium meliloti (strain 1021) (Ensifer meliloti).